We begin with the raw amino-acid sequence, 220 residues long: Ribose-5-phosphate isomerase A (220 aa).

Residues 28-31 (TGST), 81-84 (DGAD), and 94-97 (KGGG) each bind substrate. Glutamate 103 serves as the catalytic Proton acceptor. Substrate is bound at residue lysine 121.

This sequence belongs to the ribose 5-phosphate isomerase family. Homodimer.

The enzyme catalyses aldehydo-D-ribose 5-phosphate = D-ribulose 5-phosphate. Its pathway is carbohydrate degradation; pentose phosphate pathway; D-ribose 5-phosphate from D-ribulose 5-phosphate (non-oxidative stage): step 1/1. Functionally, catalyzes the reversible conversion of ribose-5-phosphate to ribulose 5-phosphate. This is Ribose-5-phosphate isomerase A from Yersinia enterocolitica serotype O:8 / biotype 1B (strain NCTC 13174 / 8081).